The sequence spans 484 residues: Glutamyl-tRNA(Gln) amidotransferase subunit A (484 aa).

Catalysis depends on charge relay system residues lysine 76 and serine 151. The Acyl-ester intermediate role is filled by serine 175.

Belongs to the amidase family. GatA subfamily. In terms of assembly, heterotrimer of A, B and C subunits.

It carries out the reaction L-glutamyl-tRNA(Gln) + L-glutamine + ATP + H2O = L-glutaminyl-tRNA(Gln) + L-glutamate + ADP + phosphate + H(+). Its function is as follows. Allows the formation of correctly charged Gln-tRNA(Gln) through the transamidation of misacylated Glu-tRNA(Gln) in organisms which lack glutaminyl-tRNA synthetase. The reaction takes place in the presence of glutamine and ATP through an activated gamma-phospho-Glu-tRNA(Gln). This is Glutamyl-tRNA(Gln) amidotransferase subunit A from Saccharophagus degradans (strain 2-40 / ATCC 43961 / DSM 17024).